Here is a 251-residue protein sequence, read N- to C-terminus: Pantothenate synthetase (251 aa).

28–35 (MGALHTGH) serves as a coordination point for ATP. His35 (proton donor) is an active-site residue. A (R)-pantoate-binding site is contributed by Gln59. Gln59 lines the beta-alanine pocket. 145-148 (GEKD) serves as a coordination point for ATP. Gln151 serves as a coordination point for (R)-pantoate. Residues Val174 and 182 to 185 (KSSR) contribute to the ATP site.

Belongs to the pantothenate synthetase family. In terms of assembly, homodimer.

Its subcellular location is the cytoplasm. The enzyme catalyses (R)-pantoate + beta-alanine + ATP = (R)-pantothenate + AMP + diphosphate + H(+). Its pathway is cofactor biosynthesis; (R)-pantothenate biosynthesis; (R)-pantothenate from (R)-pantoate and beta-alanine: step 1/1. In terms of biological role, catalyzes the condensation of pantoate with beta-alanine in an ATP-dependent reaction via a pantoyl-adenylate intermediate. This Bdellovibrio bacteriovorus (strain ATCC 15356 / DSM 50701 / NCIMB 9529 / HD100) protein is Pantothenate synthetase.